Reading from the N-terminus, the 671-residue chain is Major S-layer protein (671 aa).

An N-terminal signal peptide occupies residues 1-24 (MKRFAALSLAALMLLTVFASAASA). Residues Asn-36, Asn-70, Asn-116, and Asn-350 are each glycosylated (N-linked (GlcNAc...) asparagine). Positions 594–650 (GEEVSGEEETPEETPTGEVTETEGEEETPTEVTETPTEGEPAPEETETTESEGTTPG) are disordered. Acidic residues predominate over residues 613–622 (TETEGEEETP). A compositionally biased stretch (low complexity) spans 623–633 (TEVTETPTEGE). The segment covering 634 to 643 (PAPEETETTE) has biased composition (acidic residues). A helical transmembrane segment spans residues 647–667 (TTPGFGFMFGLVGLLAVVYLV).

This sequence belongs to the Methanosarcinales S-layer protein family. In terms of processing, glycosylated.

It is found in the secreted. Its subcellular location is the cell wall. The protein localises to the S-layer. It localises to the cell membrane. Functionally, S-layer protein. The S-layer is a paracrystalline mono-layered assembly of proteins which coat the surface of the cell. This is Major S-layer protein from Methanosarcina acetivorans (strain ATCC 35395 / DSM 2834 / JCM 12185 / C2A).